The chain runs to 1728 residues: Lysophospholipase NTE1 (1728 aa).

Over methionine 1 to lysine 44 the chain is Cytoplasmic. A helical transmembrane segment spans residues alanine 45–isoleucine 65. The Lumenal portion of the chain corresponds to serine 66–histidine 97. The chain crosses the membrane as a helical span at residues isoleucine 98 to serine 118. Residues tyrosine 119–isoleucine 1728 lie on the Cytoplasmic side of the membrane. Residues serine 141–serine 150 show a composition bias toward low complexity. Disordered stretches follow at residues serine 141–arginine 167, arginine 285–threonine 368, asparagine 406–serine 436, threonine 454–proline 488, asparagine 596–arginine 660, and alanine 687–phenylalanine 756. A compositionally biased stretch (basic and acidic residues) spans leucine 153–threonine 162. Composition is skewed to polar residues over residues serine 293–aspartate 303 and methionine 326–proline 336. Positions serine 345–serine 367 are enriched in acidic residues. Composition is skewed to polar residues over residues asparagine 406–asparagine 424, threonine 454–isoleucine 479, and lysine 599–leucine 609. A compositionally biased stretch (low complexity) spans threonine 610–glutamine 628. Composition is skewed to polar residues over residues glutamate 642–threonine 657 and isoleucine 729–phenylalanine 756. A nucleoside 3',5'-cyclic phosphate is bound by residues serine 854–leucine 987 and serine 983–lysine 1121. The segment at proline 1034–aspartate 1055 is disordered. The span at leucine 1036–glutamate 1049 shows a compositional bias: acidic residues. In terms of domain architecture, PNPLA spans leucine 1422–lysine 1586. The GXGXXG motif lies at glycine 1426–glycine 1431. Positions glycine 1453–glycine 1457 match the GXSXG motif. Catalysis depends on serine 1455, which acts as the Nucleophile. Aspartate 1573 serves as the catalytic Proton acceptor. Residues aspartate 1573–glycine 1575 carry the DGA/G motif.

Belongs to the NTE family.

It localises to the endoplasmic reticulum membrane. The catalysed reaction is a 1-acyl-sn-glycero-3-phosphocholine + H2O = sn-glycerol 3-phosphocholine + a fatty acid + H(+). Inhibited by organophosphorus esters. Functionally, intracellular phospholipase B that catalyzes the double deacylation of phosphatidylcholine (PC) to glycerophosphocholine (GroPCho). Plays an important role in membrane lipid homeostasis. Responsible for the rapid PC turnover in response to inositol, elevated temperatures, or when choline is present in the growth medium. This chain is Lysophospholipase NTE1 (NTE1), found in Candida glabrata (strain ATCC 2001 / BCRC 20586 / JCM 3761 / NBRC 0622 / NRRL Y-65 / CBS 138) (Yeast).